A 115-amino-acid chain; its full sequence is MKFVLLFGVLLVTLFSYSSAEMLDDFDQADEDELLSLIEKEEARAKECTPRFYDCSHDRHSCCRSELFKDVCTCFYPEGGDNEVCTCQQPKHLKYMEKAADKAKKFGGKTKKWFG.

A signal peptide spans 1-20; it reads MKFVLLFGVLLVTLFSYSSA. Positions 21 to 44 are excised as a propeptide; the sequence is EMLDDFDQADEDELLSLIEKEEAR. 4 disulfide bridges follow: C48-C63, C55-C72, C62-C87, and C74-C85.

This sequence belongs to the neurotoxin 19 (CSTX) family. 01 subfamily. Expressed by the venom gland.

It is found in the secreted. The chain is U3-lycotoxin-Ls1d from Lycosa singoriensis (Wolf spider).